A 122-amino-acid polypeptide reads, in one-letter code: Lithostathine (122 aa).

The N-terminal stretch at 1–26 (MLPSMSLPSLXWMLLSCLMLLSQVQG) is a signal peptide. Positions 27 to 37 (EDSPADTPSAR) are excised as a propeptide. One can recognise a C-type lectin domain in the interval 38 to 122 (ISCPKGSMAY…LEPNAGGWEW (85 aa)). The cysteines at positions 40 and 51 are disulfide-linked.

As to quaternary structure, cleaved to give an A chain and a B chain joined by a disulfide bond. In pancreatic acinar cells.

Its subcellular location is the secreted. In terms of biological role, might act as an inhibitor of spontaneous calcium carbonate precipitation. This chain is Lithostathine (PTP), found in Sus scrofa (Pig).